We begin with the raw amino-acid sequence, 616 residues long: E3 ubiquitin-protein ligase DTX4 (616 aa).

WWE domains are found at residues 1–78 and 79–155; these read MLLA…PVRR and NYYD…RVRR. Disordered regions lie at residues 223 to 254 and 355 to 387; these read VGKLPQPPGPGAKPLDTTGTIRGPGKTAPSQV and PPPVSKSEIKSIPGVSNTSRKTTKKQAKKGKTP. Positions 375–384 are enriched in basic residues; it reads KTTKKQAKKG. The RING-type; atypical zinc-finger motif lies at 406–465; sequence CTICMERLTAPSGYKGPQPTVKPDLVGKLSRCGHIYHIYCLVAMYNNGNKDGSLQCPTCK.

The protein belongs to the Deltex family. As to quaternary structure, interacts with NLRP4. As to expression, expressed in brain, testis, embryonic fibroblasts and thymocytes.

The protein resides in the cytoplasm. The catalysed reaction is S-ubiquitinyl-[E2 ubiquitin-conjugating enzyme]-L-cysteine + [acceptor protein]-L-lysine = [E2 ubiquitin-conjugating enzyme]-L-cysteine + N(6)-ubiquitinyl-[acceptor protein]-L-lysine.. Its pathway is protein modification; protein ubiquitination. Functionally, functions as a ubiquitin ligase protein in vivo, mediating 'Lys48'-linked polyubiquitination and promoting degradation of TBK1, targeting to TBK1 requires interaction with NLRP4. Regulator of Notch signaling, a signaling pathway involved in cell-cell communications that regulates a broad spectrum of cell-fate determinations. This chain is E3 ubiquitin-protein ligase DTX4 (Dtx4), found in Mus musculus (Mouse).